The following is a 461-amino-acid chain: MIPRLMCTQHPDATVKVTANEEVDEALVAYTAYGCDEVMIDYEGKTTPYSQPKDITVKAYEAGLPLGEKFFLTPRMPNPRLEEFERSMLTLEAAILANYFSVKLMGRQAIRWIVLPMVTDIETLGLVYRMLLHKTEAYIKETGVKLEPPELIPLIEDAIAQLKADELISGLLKQMAQQPQYIRLFLGKSDSAVRHGHLASALAIVATLSKMRSVEKSLGIKIYPILGMGSPPFRGGINNPSLSHLETIQYVGYYTVTVQSAVRYDTSYDEYIKVRETILNACCLPSREINLPELEEIITKASSTYKSVVVKFADRIVQMARLIPGTRDRISWTVYGRNITAEDRVVNMPRAIVYTSAWYAMGLPPTFLDAPTVVELAKSDKLDLVLKALPSLRREWEYDAQFYDPQVASRYTSEDFVKVVNEMLDYLGINLRANGTYLSLLRMNRNESNILAMGKYRKFLG.

This sequence belongs to the PEPCase type 2 family. Homotetramer. The cofactor is Mg(2+).

The catalysed reaction is oxaloacetate + phosphate = phosphoenolpyruvate + hydrogencarbonate. In terms of biological role, catalyzes the irreversible beta-carboxylation of phosphoenolpyruvate (PEP) to form oxaloacetate (OAA), a four-carbon dicarboxylic acid source for the tricarboxylic acid cycle. In Pyrobaculum islandicum (strain DSM 4184 / JCM 9189 / GEO3), this protein is Phosphoenolpyruvate carboxylase.